The following is a 151-amino-acid chain: UPF0178 protein YaiI (151 aa).

It belongs to the UPF0178 family.

The chain is UPF0178 protein YaiI from Salmonella paratyphi C (strain RKS4594).